A 609-amino-acid polypeptide reads, in one-letter code: UvrABC system protein C (609 aa).

Residues Ile-19 to Val-97 form the GIY-YIG domain. The 36-residue stretch at Glu-208–Phe-243 folds into the UVR domain.

Belongs to the UvrC family. Interacts with UvrB in an incision complex.

The protein localises to the cytoplasm. Functionally, the UvrABC repair system catalyzes the recognition and processing of DNA lesions. UvrC both incises the 5' and 3' sides of the lesion. The N-terminal half is responsible for the 3' incision and the C-terminal half is responsible for the 5' incision. In Leptospira borgpetersenii serovar Hardjo-bovis (strain JB197), this protein is UvrABC system protein C.